The chain runs to 211 residues: 3-demethoxyubiquinol 3-hydroxylase (211 aa).

6 residues coordinate Fe cation: glutamate 60, glutamate 90, histidine 93, glutamate 142, glutamate 174, and histidine 177.

It belongs to the COQ7 family. It depends on Fe cation as a cofactor.

It localises to the cell membrane. The enzyme catalyses a 5-methoxy-2-methyl-3-(all-trans-polyprenyl)benzene-1,4-diol + AH2 + O2 = a 3-demethylubiquinol + A + H2O. Its pathway is cofactor biosynthesis; ubiquinone biosynthesis. Functionally, catalyzes the hydroxylation of 2-nonaprenyl-3-methyl-6-methoxy-1,4-benzoquinol during ubiquinone biosynthesis. In Acinetobacter baylyi (strain ATCC 33305 / BD413 / ADP1), this protein is 3-demethoxyubiquinol 3-hydroxylase.